Consider the following 161-residue polypeptide: ATP synthase subunit b 1 (161 aa).

Residues 5 to 25 (EFWVAVAFVIFCGIVWKAGGF) traverse the membrane as a helical segment.

Belongs to the ATPase B chain family. In terms of assembly, F-type ATPases have 2 components, F(1) - the catalytic core - and F(0) - the membrane proton channel. F(1) has five subunits: alpha(3), beta(3), gamma(1), delta(1), epsilon(1). F(0) has three main subunits: a(1), b(2) and c(10-14). The alpha and beta chains form an alternating ring which encloses part of the gamma chain. F(1) is attached to F(0) by a central stalk formed by the gamma and epsilon chains, while a peripheral stalk is formed by the delta and b chains.

Its subcellular location is the cell inner membrane. Functionally, f(1)F(0) ATP synthase produces ATP from ADP in the presence of a proton or sodium gradient. F-type ATPases consist of two structural domains, F(1) containing the extramembraneous catalytic core and F(0) containing the membrane proton channel, linked together by a central stalk and a peripheral stalk. During catalysis, ATP synthesis in the catalytic domain of F(1) is coupled via a rotary mechanism of the central stalk subunits to proton translocation. In terms of biological role, component of the F(0) channel, it forms part of the peripheral stalk, linking F(1) to F(0). This is ATP synthase subunit b 1 from Methylobacterium sp. (strain 4-46).